The following is a 431-amino-acid chain: 23S rRNA (uracil(1939)-C(5))-methyltransferase RlmD (431 aa).

The region spanning 8–68 (KRRVTTRQII…SKYSRGQVKR (61 aa)) is the TRAM domain. [4Fe-4S] cluster-binding residues include C81, C87, C90, and C162. The S-adenosyl-L-methionine site is built by Q265, F294, N299, E315, N342, and D363. C389 (nucleophile) is an active-site residue.

The protein belongs to the class I-like SAM-binding methyltransferase superfamily. RNA M5U methyltransferase family. RlmD subfamily.

The enzyme catalyses uridine(1939) in 23S rRNA + S-adenosyl-L-methionine = 5-methyluridine(1939) in 23S rRNA + S-adenosyl-L-homocysteine + H(+). Its function is as follows. Catalyzes the formation of 5-methyl-uridine at position 1939 (m5U1939) in 23S rRNA. This is 23S rRNA (uracil(1939)-C(5))-methyltransferase RlmD from Enterobacter sp. (strain 638).